We begin with the raw amino-acid sequence, 1214 residues long: Brassinosteroid LRR receptor kinase BRL3 (1214 aa).

Positions 1–29 (MAAVRVVAPAPSVLLLVAAAVVLLHLARA) are cleaved as a signal peptide. Asparagine 61 is a glycosylation site (N-linked (GlcNAc...) asparagine). The short motif at 69-76 (CAWAGVSC) is the Cys pair 1 element. LRR repeat units lie at residues 103-127 (LSAL…GSPR), 131-155 (PCAL…FLAS), 156-177 (CGGL…YPFP), 178-202 (PSLR…SLTG), 204-228 (HGIQ…PCTE), 230-250 (SVLD…FVAM), 252-276 (PANL…EFGG), 277-302 (CANL…LVDC), 303-325 (RRLE…TFLV), 327-351 (LQAL…LSIL), 353-375 (KTLV…SFGQ), 377-400 (RFLQ…VITN), 401-427 (ISSL…ASRC), 429-451 (LLEV…LCSS), 452-476 (LPSL…LSNC), 478-500 (NLES…ILFL), 502-525 (KLVD…CFNS), 526-549 (TALE…ITRC), 550-572 (VNLI…GFGN), 573-597 (LQNL…LGSC), 599-621 (NLIW…LAAQ), and 650-673 (GVLF…HLCS). 4 N-linked (GlcNAc...) asparagine glycosylation sites follow: asparagine 145, asparagine 163, asparagine 197, and asparagine 210. Residues asparagine 254, asparagine 264, and asparagine 279 are each glycosylated (N-linked (GlcNAc...) asparagine). N-linked (GlcNAc...) asparagine glycosylation is found at asparagine 400 and asparagine 413. Asparagine 466 carries N-linked (GlcNAc...) asparagine glycosylation. N-linked (GlcNAc...) asparagine glycosylation is found at asparagine 512 and asparagine 524. An N-linked (GlcNAc...) asparagine glycan is attached at asparagine 561. Tyrosine 678 serves as a coordination point for brassinolide. 4 LRR repeats span residues 689 to 712 (NGSM…SFGN), 713 to 736 (MTYL…AFTG), 738 to 760 (KGIG…GFGC), and 762 to 786 (HFLA…QLIT). The Cys pair 2 motif lies at 799–806 (CGIPLNPC). A helical transmembrane segment spans residues 829 to 849 (SVFLAVTLSVLILFSLLIIHY). In terms of domain architecture, Protein kinase spans 913-1196 (FCAETLIGSG…FQVDSGSNFL (284 aa)). ATP-binding positions include 919-927 (IGSGGFGEV), lysine 941, 987-989 (EYM), 993-996 (SLDF), 1039-1044 (DMKSSN), and aspartate 1057. The Proton acceptor role is filled by aspartate 1039.

The protein belongs to the protein kinase superfamily. Ser/Thr protein kinase family. Highly expressed in roots. Expressed at low levels in shoots.

The protein localises to the cell membrane. It catalyses the reaction L-seryl-[protein] + ATP = O-phospho-L-seryl-[protein] + ADP + H(+). It carries out the reaction L-threonyl-[protein] + ATP = O-phospho-L-threonyl-[protein] + ADP + H(+). In terms of biological role, may be involved in brassenosteroid (BR) perception in roots. The polypeptide is Brassinosteroid LRR receptor kinase BRL3 (Oryza sativa subsp. japonica (Rice)).